A 365-amino-acid polypeptide reads, in one-letter code: NADH-quinone oxidoreductase subunit H (365 aa).

The next 8 membrane-spanning stretches (helical) occupy residues 27–47 (LLLILAIIIPLLLAVAYLTFA), 99–119 (FLFLLAPILAITPALAAWAVV), 133–153 (ALLYILAMTSLGVYGVIIAGW), 168–188 (AAQVISYELAMGFALVCVLMM), 206–226 (FLNWYMIPLFPMFLVYFISGV), 268–288 (ILVATLASIMFLGGWLPPVDI), 294–314 (IPGVVWLLLKIAIMLFFFLWF), and 329–349 (LGWKVFIPITLIWIVLLGAVM).

The protein belongs to the complex I subunit 1 family. As to quaternary structure, NDH-1 is composed of 14 different subunits. Subunits NuoA, H, J, K, L, M, N constitute the membrane sector of the complex.

It is found in the cell inner membrane. The enzyme catalyses a quinone + NADH + 5 H(+)(in) = a quinol + NAD(+) + 4 H(+)(out). In terms of biological role, NDH-1 shuttles electrons from NADH, via FMN and iron-sulfur (Fe-S) centers, to quinones in the respiratory chain. The immediate electron acceptor for the enzyme in this species is believed to be ubiquinone. Couples the redox reaction to proton translocation (for every two electrons transferred, four hydrogen ions are translocated across the cytoplasmic membrane), and thus conserves the redox energy in a proton gradient. This subunit may bind ubiquinone. This is NADH-quinone oxidoreductase subunit H from Nitrosomonas eutropha (strain DSM 101675 / C91 / Nm57).